The sequence spans 418 residues: Trimethyllysine dioxygenase, mitochondrial (418 aa).

Residues H239, D241, and H386 each coordinate Fe cation.

This sequence belongs to the gamma-BBH/TMLD family. Homodimer. It depends on Fe(2+) as a cofactor. L-ascorbate is required as a cofactor.

The protein resides in the mitochondrion matrix. It catalyses the reaction N(6),N(6),N(6)-trimethyl-L-lysine + 2-oxoglutarate + O2 = (3S)-3-hydroxy-N(6),N(6),N(6)-trimethyl-L-lysine + succinate + CO2. It functions in the pathway amine and polyamine biosynthesis; carnitine biosynthesis. Converts trimethyllysine (TML) into hydroxytrimethyllysine (HTML). This is Trimethyllysine dioxygenase, mitochondrial (TMLHE) from Gallus gallus (Chicken).